A 312-amino-acid chain; its full sequence is Pantothenate kinase (312 aa).

97-104 (GSVAVGKS) contributes to the ATP binding site.

The protein belongs to the prokaryotic pantothenate kinase family.

The protein localises to the cytoplasm. It catalyses the reaction (R)-pantothenate + ATP = (R)-4'-phosphopantothenate + ADP + H(+). Its pathway is cofactor biosynthesis; coenzyme A biosynthesis; CoA from (R)-pantothenate: step 1/5. This is Pantothenate kinase from Mycobacterium bovis (strain BCG / Pasteur 1173P2).